A 259-amino-acid polypeptide reads, in one-letter code: Global transcriptional regulator CodY (259 aa).

The tract at residues 1–155 is GAF domain; it reads MNLLAKTRKL…GATVVGMEIL (155 aa). Residues 203 to 222 constitute a DNA-binding region (H-T-H motif); it reads ASKIADRVGITRSVIVNALR.

This sequence belongs to the CodY family.

Its subcellular location is the cytoplasm. Functionally, DNA-binding global transcriptional regulator which is involved in the adaptive response to starvation and acts by directly or indirectly controlling the expression of numerous genes in response to nutrient availability. During rapid exponential growth, CodY is highly active and represses genes whose products allow adaptation to nutrient depletion. This is Global transcriptional regulator CodY from Exiguobacterium sibiricum (strain DSM 17290 / CCUG 55495 / CIP 109462 / JCM 13490 / 255-15).